Here is a 185-residue protein sequence, read N- to C-terminus: Protein OPG161 (185 aa).

The Intravirion portion of the chain corresponds to Met-1–Ile-33. The chain crosses the membrane as a helical span at residues Gly-34–Ile-56. The Virion surface portion of the chain corresponds to Val-57–Asn-185. The tract at residues Glu-98–Asn-185 is C-type lectin-like domain. Asn-125 and Asn-135 each carry an N-linked (GlcNAc...) asparagine; by host glycan.

Belongs to the orthopoxvirus OPG161 family. In terms of assembly, homodimer, disulfide-linked. Interacts with protein OPG190. Interacts (via C-terminus) with protein OPG164. Interacts with OPG162.

The protein localises to the virion membrane. Its subcellular location is the host membrane. Its function is as follows. Forms a complex with OPG162 and OPG190 to coordinate the incorporation of OPG164 into wrapped enveloped virion (EV) membranes and, subsequently, the production of actin tails. Therefore plays an essential role in efficient cell-to-cell spread of viral particles. The sequence is that of Protein OPG161 (OPG161) from Homo sapiens (Human).